Consider the following 115-residue polypeptide: uncharacterized protein (115 aa).

3 helical membrane passes run 7 to 27 (TLIFFPLILQIVVTALLIWFD), 40 to 60 (YALTAFLLAAIPAFLTALLAA), and 72 to 92 (IVLVSSIISFVYCNMASYFYL).

Its subcellular location is the cell membrane. This is an uncharacterized protein from Haemophilus influenzae (strain ATCC 51907 / DSM 11121 / KW20 / Rd).